A 561-amino-acid chain; its full sequence is Oxygen-dependent choline dehydrogenase (561 aa).

Residue 6–35 (DYIIIGAGSAGNVLATRLTEDADVSVLLLE) coordinates FAD. Histidine 475 functions as the Proton acceptor in the catalytic mechanism.

This sequence belongs to the GMC oxidoreductase family. The cofactor is FAD.

The enzyme catalyses choline + A = betaine aldehyde + AH2. It catalyses the reaction betaine aldehyde + NAD(+) + H2O = glycine betaine + NADH + 2 H(+). It participates in amine and polyamine biosynthesis; betaine biosynthesis via choline pathway; betaine aldehyde from choline (cytochrome c reductase route): step 1/1. In terms of biological role, involved in the biosynthesis of the osmoprotectant glycine betaine. Catalyzes the oxidation of choline to betaine aldehyde and betaine aldehyde to glycine betaine at the same rate. The polypeptide is Oxygen-dependent choline dehydrogenase (Pseudomonas aeruginosa (strain LESB58)).